The following is a 94-amino-acid chain: Small ribosomal subunit protein bS18 (94 aa).

Positions Met1–Glu12 are enriched in low complexity. Positions Met1–Lys29 are disordered. The segment covering Arg16–Lys29 has biased composition (basic residues).

Belongs to the bacterial ribosomal protein bS18 family. In terms of assembly, part of the 30S ribosomal subunit. Forms a tight heterodimer with protein bS6.

Functionally, binds as a heterodimer with protein bS6 to the central domain of the 16S rRNA, where it helps stabilize the platform of the 30S subunit. The sequence is that of Small ribosomal subunit protein bS18 from Leuconostoc citreum (strain KM20).